We begin with the raw amino-acid sequence, 1127 residues long: Glutamate receptor-interacting protein 1 (1127 aa).

Glutamine 11 carries S-palmitoyl cysteine lipidation. The residue at position 43 (serine 43) is a Phosphoserine. PDZ domains follow at residues 53–136 (VVEL…EYEL), 150–238 (TVEV…EYDV), 252–336 (LVEV…LPHH), 471–560 (EVVL…EFDV), 572–657 (HVKL…RKDE), and 672–754 (TVEL…KKQT). Disordered regions lie at residues 752–802 (KQTD…PSVD), 840–865 (KQRT…SNED), and 942–980 (MARS…GRKS). Composition is skewed to polar residues over residues 840-856 (KQRT…SQTY) and 947-973 (LGRQ…NTLP). In terms of domain architecture, PDZ 7 spans 1003–1085 (KVTLYKDSGM…KLDLVISRNP (83 aa)). The segment at 1108–1127 (FFQQPSHGGNLETREPTNTL) is disordered.

Interacts with EFNB3, GRIA2, GRIA3, GRIPAP1/GRASP1, PPFIA1, PPFIA4, FRAS1, PTPRF, liprins-alpha and the C-terminal tail of PRLHR. Can form homomultimers or heteromultimers with GRIP2. Interacts with EFNB1, EPHA7, EPHB2, KIF5A, KIF5B and KIF5C. Forms a ternary complex with GRIA2 and CSPG4. Interacts with ATAD1 in an ATP-dependent manner. ATAD1-catalyzed ATP hydrolysis disrupts binding to ATAD1 and to GRIA2 and leads to AMPAR complex disassembly. Interacts with SLC30A9 and PLCD4. Interacts with BUD23. Forms a complex with NSG1, GRIA2 and STX12; controls the intracellular fate of AMPAR and the endosomal sorting of the GRIA2 subunit toward recycling and membrane targeting. Interacts with NSG1. Palmitoylation of isoform 2. Expressed in brain. Isoform 2 is the major isoform in brain. Expressed in oligodendrocyte lineage cells.

It localises to the membrane. It is found in the cytoplasmic vesicle. The protein resides in the perikaryon. Its subcellular location is the cell projection. The protein localises to the dendrite. It localises to the cytoplasm. It is found in the endomembrane system. The protein resides in the postsynaptic cell membrane. Its subcellular location is the postsynaptic density. The protein localises to the endoplasmic reticulum membrane. Its function is as follows. May play a role as a localized scaffold for the assembly of a multiprotein signaling complex and as mediator of the trafficking of its binding partners at specific subcellular location in neurons. Through complex formation with NSG1, GRIA2 and STX12 controls the intracellular fate of AMPAR and the endosomal sorting of the GRIA2 subunit toward recycling and membrane targeting. The sequence is that of Glutamate receptor-interacting protein 1 (Grip1) from Mus musculus (Mouse).